Reading from the N-terminus, the 513-residue chain is ATP synthase subunit alpha 1 (513 aa).

Position 169 to 176 (169 to 176 (GDRQCGKT)) interacts with ATP.

It belongs to the ATPase alpha/beta chains family. F-type ATPases have 2 components, CF(1) - the catalytic core - and CF(0) - the membrane proton channel. CF(1) has five subunits: alpha(3), beta(3), gamma(1), delta(1), epsilon(1). CF(0) has three main subunits: a(1), b(2) and c(9-12). The alpha and beta chains form an alternating ring which encloses part of the gamma chain. CF(1) is attached to CF(0) by a central stalk formed by the gamma and epsilon chains, while a peripheral stalk is formed by the delta and b chains.

The protein localises to the cell inner membrane. It catalyses the reaction ATP + H2O + 4 H(+)(in) = ADP + phosphate + 5 H(+)(out). Functionally, produces ATP from ADP in the presence of a proton gradient across the membrane. The alpha chain is a regulatory subunit. The polypeptide is ATP synthase subunit alpha 1 (Burkholderia thailandensis (strain ATCC 700388 / DSM 13276 / CCUG 48851 / CIP 106301 / E264)).